The sequence spans 105 residues: Small ribosomal subunit protein uS10 (105 aa).

It belongs to the universal ribosomal protein uS10 family. As to quaternary structure, part of the 30S ribosomal subunit.

In terms of biological role, involved in the binding of tRNA to the ribosomes. This Rickettsia felis (strain ATCC VR-1525 / URRWXCal2) (Rickettsia azadi) protein is Small ribosomal subunit protein uS10.